The following is a 513-amino-acid chain: Palmitoyltransferase ZDHHC14 (513 aa).

The Cytoplasmic portion of the chain corresponds to Met-1–Gln-59. The chain crosses the membrane as a helical span at residues Thr-60 to Phe-80. The Lumenal portion of the chain corresponds to Asp-81 to Asn-88. Residues Leu-89–Leu-109 traverse the membrane as a helical segment. The Cytoplasmic portion of the chain corresponds to Arg-110 to Arg-207. The DHHC domain occupies Lys-164–Leu-214. Cys-194 functions as the S-palmitoyl cysteine intermediate in the catalytic mechanism. A helical membrane pass occupies residues Phe-208–Ile-228. Residues Thr-229 to Thr-266 lie on the Lumenal side of the membrane. The chain crosses the membrane as a helical span at residues Ala-267–Leu-287. Residues Ser-288–Val-513 lie on the Cytoplasmic side of the membrane. The interval Phe-348–Asn-369 is disordered. Positions Gln-355–Asn-369 are enriched in polar residues.

It belongs to the DHHC palmitoyltransferase family. ERF2/ZDHHC9 subfamily.

The protein localises to the endoplasmic reticulum membrane. It is found in the golgi apparatus membrane. The catalysed reaction is L-cysteinyl-[protein] + hexadecanoyl-CoA = S-hexadecanoyl-L-cysteinyl-[protein] + CoA. Functionally, palmitoyltransferase that could catalyze the addition of palmitate onto various protein substrates. The chain is Palmitoyltransferase ZDHHC14 (zdhhc14) from Danio rerio (Zebrafish).